A 312-amino-acid chain; its full sequence is Isethionate sulfite-lyase activating enzyme (312 aa).

Residues 20 to 304 enclose the Radical SAM core domain; the sequence is HDGPGIRTIV…GLQKTALDIL (285 aa). The [4Fe-4S] cluster site is built by Cys34, Cys38, Cys41, Cys60, Cys66, Cys69, Cys73, Cys93, Cys96, Cys100, and Cys104. 40 to 42 contacts S-adenosyl-L-methionine; sequence WCS. 4Fe-4S ferredoxin-type domains follow at residues 51 to 83 and 84 to 115; these read AELA…CGDD and DKPR…YGKK. S-adenosyl-L-methionine-binding positions include Gly144, 193 to 195, and His267; that span reads DIK.

Belongs to the organic radical-activating enzymes family. In terms of assembly, monomer. [4Fe-4S] cluster is required as a cofactor.

The enzyme catalyses glycyl-[protein] + reduced [flavodoxin] + S-adenosyl-L-methionine = glycin-2-yl radical-[protein] + semiquinone [flavodoxin] + 5'-deoxyadenosine + L-methionine + H(+). The protein operates within organosulfur degradation; alkanesulfonate degradation. In terms of biological role, involved in an anaerobic respiration pathway that converts the sulfonate isethionate (2-hydroxyethanesulfonate) to ammonia, acetate and sulfide. Catalyzes activation of the isethionate sulfite-lyase IslA under anaerobic conditions by generation of an organic free radical on a glycine residue, via a homolytic cleavage of S-adenosyl-L-methionine (SAM). The protein is Isethionate sulfite-lyase activating enzyme of Desulfovibrio desulfuricans (strain ATCC 27774 / DSM 6949 / MB).